The sequence spans 447 residues: Glutamate-1-semialdehyde 2,1-aminomutase (447 aa).

N6-(pyridoxal phosphate)lysine is present on K277.

The protein belongs to the class-III pyridoxal-phosphate-dependent aminotransferase family. HemL subfamily. In terms of assembly, homodimer. It depends on pyridoxal 5'-phosphate as a cofactor.

The protein resides in the cytoplasm. The catalysed reaction is (S)-4-amino-5-oxopentanoate = 5-aminolevulinate. It participates in porphyrin-containing compound metabolism; protoporphyrin-IX biosynthesis; 5-aminolevulinate from L-glutamyl-tRNA(Glu): step 2/2. The sequence is that of Glutamate-1-semialdehyde 2,1-aminomutase from Arthrobacter sp. (strain FB24).